A 167-amino-acid polypeptide reads, in one-letter code: SsrA-binding protein (167 aa).

The segment at 139 to 167 (QAHDKRHAEKEREWQRDKQRIMRAHNRNA) is disordered. The span at 144 to 158 (RHAEKEREWQRDKQR) shows a compositional bias: basic and acidic residues.

Belongs to the SmpB family.

The protein localises to the cytoplasm. Its function is as follows. Required for rescue of stalled ribosomes mediated by trans-translation. Binds to transfer-messenger RNA (tmRNA), required for stable association of tmRNA with ribosomes. tmRNA and SmpB together mimic tRNA shape, replacing the anticodon stem-loop with SmpB. tmRNA is encoded by the ssrA gene; the 2 termini fold to resemble tRNA(Ala) and it encodes a 'tag peptide', a short internal open reading frame. During trans-translation Ala-aminoacylated tmRNA acts like a tRNA, entering the A-site of stalled ribosomes, displacing the stalled mRNA. The ribosome then switches to translate the ORF on the tmRNA; the nascent peptide is terminated with the 'tag peptide' encoded by the tmRNA and targeted for degradation. The ribosome is freed to recommence translation, which seems to be the essential function of trans-translation. The protein is SsrA-binding protein of Xylella fastidiosa (strain 9a5c).